Here is a 56-residue protein sequence, read N- to C-terminus: Sex-specific storage protein 1 (56 aa).

This sequence belongs to the hemocyanin family. As to expression, expressed in fat body and ovary.

It is found in the secreted. Its function is as follows. Larval storage protein (LSP) which may serve as a store of amino acids for synthesis of adult proteins. The biosynthesis, accumulation and sequestration of storage protein-1 takes place during metamorphosis and saves energy for the non-feeding pupal stage. May also be essential for egg formation. The chain is Sex-specific storage protein 1 from Amsacta albistriga (Red hairy caterpillar).